The following is a 390-amino-acid chain: Chalcone synthase (390 aa).

Cys164 is a catalytic residue.

It belongs to the thiolase-like superfamily. Chalcone/stilbene synthases family.

The catalysed reaction is (E)-4-coumaroyl-CoA + 3 malonyl-CoA + 3 H(+) = 2',4,4',6'-tetrahydroxychalcone + 3 CO2 + 4 CoA. It functions in the pathway secondary metabolite biosynthesis; flavonoid biosynthesis. The primary product of this enzyme is 4,2',4',6'-tetrahydroxychalcone (also termed naringenin-chalcone or chalcone) which undergoes enzyme-catalyzed or spontaneous isomerization into naringenin. This chain is Chalcone synthase, found in Hypericum androsaemum (Tutsan).